The chain runs to 582 residues: ATP-dependent lipid A-core flippase (582 aa).

5 helical membrane-spanning segments follow: residues 16–36 (LWPT…ALIL), 63–83 (VLVW…ITSY), 153–173 (IIGL…ILIV), 253–273 (PIIQ…ASFP), and 275–295 (VMDN…IALM). One can recognise an ABC transmembrane type-1 domain in the interval 28–310 (IVAGVALILN…LTNVNAQFQR (283 aa)). One can recognise an ABC transporter domain in the interval 342 to 578 (VEFRNVTFTY…RGVYAQLHKM (237 aa)). 376-383 (GRSGSGKS) is an ATP binding site.

It belongs to the ABC transporter superfamily. Lipid exporter (TC 3.A.1.106) family. Homodimer.

Its subcellular location is the cell inner membrane. It catalyses the reaction ATP + H2O + lipid A-core oligosaccharideSide 1 = ADP + phosphate + lipid A-core oligosaccharideSide 2.. Functionally, involved in lipopolysaccharide (LPS) biosynthesis. Translocates lipid A-core from the inner to the outer leaflet of the inner membrane. Transmembrane domains (TMD) form a pore in the inner membrane and the ATP-binding domain (NBD) is responsible for energy generation. This Shigella flexneri protein is ATP-dependent lipid A-core flippase.